We begin with the raw amino-acid sequence, 717 residues long: Epithelial splicing regulatory protein 2 (717 aa).

Positions 1–14 are enriched in pro residues; sequence MTPPPPPPPPPGPD. Positions 1 to 23 are disordered; it reads MTPPPPPPPPPGPDPAVDSATDP. Ser83 is subject to Phosphoserine. RRM domains lie at 247–343, 348–428, and 465–545; these read TVVR…RFLS, VILR…RSTA, and DCVR…PCST. Position 563 is a phosphoserine (Ser563).

It belongs to the ESRP family. As to quaternary structure, interacts with RBPMS. As to expression, epithelial cell-specific.

The protein resides in the nucleus. Functionally, mRNA splicing factor that regulates the formation of epithelial cell-specific isoforms. Specifically regulates the expression of FGFR2-IIIb, an epithelial cell-specific isoform of FGFR2. Also regulates the splicing of CD44, CTNND1, ENAH, 3 transcripts that undergo changes in splicing during the epithelial-to-mesenchymal transition (EMT). Acts by directly binding specific sequences in mRNAs. Binds the GU-rich sequence motifs in the ISE/ISS-3, a cis-element regulatory region present in the mRNA of FGFR2. This chain is Epithelial splicing regulatory protein 2 (Esrp2), found in Mus musculus (Mouse).